A 521-amino-acid chain; its full sequence is Cytokinin dehydrogenase 9 (521 aa).

The first 22 residues, 1 to 22, serve as a signal peptide directing secretion; the sequence is MRPSLLQYLKLLLLLALGGVTT. The N-linked (GlcNAc...) asparagine glycan is linked to asparagine 57. The FAD-binding PCMH-type domain occupies 59-237; the sequence is SSFPPVAVLH…TRARIPLEPA (179 aa). Residues alanine 95, glycine 97, and glycine 99 each contribute to the FAD site. At histidine 100 the chain carries Pros-8alpha-FAD histidine. FAD is bound by residues serine 101, glutamine 105, aspartate 161, threonine 166, serine 172, valine 176, and isoleucine 227. Residues asparagine 278, asparagine 412, and asparagine 418 are each glycosylated (N-linked (GlcNAc...) asparagine). Tyrosine 469 contributes to the FAD binding site. An N-linked (GlcNAc...) asparagine glycan is attached at asparagine 472. Residue glutamine 507 coordinates FAD.

The protein belongs to the oxygen-dependent FAD-linked oxidoreductase family. Monomer. Requires FAD as cofactor. As to expression, expressed in inflorescence meristems.

It is found in the secreted. Its subcellular location is the extracellular space. The protein resides in the cytoplasm. The protein localises to the cytosol. It localises to the nucleus. The enzyme catalyses N(6)-dimethylallyladenine + A + H2O = 3-methyl-2-butenal + adenine + AH2. Functionally, catalyzes the oxidation of cytokinins, a family of N(6)-substituted adenine derivatives that are plant hormones, where the substituent is an isopentenyl group. Possesses cytokinin oxidase activity toward trans-zeatin (tZ) and N6-(2-isopentenyl)adenine (2iP) in vitro. Functions as a primary strigolactone-responsive gene to regulate rice tillering, plant height, and panicle size, likely via a secondary response gene, RR5, which encodes a cytokinin-inducible rice type-A response regulator that seems to act as negative regulator of the cytokinin signaling. This chain is Cytokinin dehydrogenase 9, found in Oryza sativa subsp. japonica (Rice).